A 154-amino-acid chain; its full sequence is uncharacterized protein (154 aa).

The next 2 membrane-spanning stretches (helical) occupy residues 54-74 and 81-101; these read FLITNLIFFFAAFVALLIYLL and FAFVFIAAIIFIIFYNIFFLS.

Its subcellular location is the cell membrane. This is an uncharacterized protein from Mycoplasma genitalium (strain ATCC 33530 / DSM 19775 / NCTC 10195 / G37) (Mycoplasmoides genitalium).